We begin with the raw amino-acid sequence, 237 residues long: KH homology domain-containing protein 1 (237 aa).

Transmembrane regions (helical) follow at residues 7–29 and 33–50; these read RLFR…FIYG and LQTL…HLWI. The 60-residue stretch at 96-155 folds into the KH; atypical domain; the sequence is PMVFHMEEDQEELIFGHGDTYLRCIEVHSHTLIQLESWFTATGQTRVTVVGPHRARQWLL.

It belongs to the KHDC1 family.

The protein resides in the membrane. The chain is KH homology domain-containing protein 1 from Homo sapiens (Human).